Here is a 250-residue protein sequence, read N- to C-terminus: 1-(5-phosphoribosyl)-5-[(5-phosphoribosylamino)methylideneamino] imidazole-4-carboxamide isomerase (250 aa).

Residue Asp-10 is the Proton acceptor of the active site. Catalysis depends on Asp-131, which acts as the Proton donor.

This sequence belongs to the HisA/HisF family.

It is found in the cytoplasm. It catalyses the reaction 1-(5-phospho-beta-D-ribosyl)-5-[(5-phospho-beta-D-ribosylamino)methylideneamino]imidazole-4-carboxamide = 5-[(5-phospho-1-deoxy-D-ribulos-1-ylimino)methylamino]-1-(5-phospho-beta-D-ribosyl)imidazole-4-carboxamide. The protein operates within amino-acid biosynthesis; L-histidine biosynthesis; L-histidine from 5-phospho-alpha-D-ribose 1-diphosphate: step 4/9. This chain is 1-(5-phosphoribosyl)-5-[(5-phosphoribosylamino)methylideneamino] imidazole-4-carboxamide isomerase, found in Desulfitobacterium hafniense (strain DSM 10664 / DCB-2).